The primary structure comprises 254 residues: Photosystem II 22 kDa protein 2, chloroplastic (254 aa).

Residues 1-38 constitute a chloroplast transit peptide; sequence MALQQSMAMPMMVVSGLGTAPRSSPMVQLQRMKKHLVV. A run of 2 repeats spans residues 42-148 and 149-253. 4 consecutive transmembrane segments (helical) span residues 86–106, 120–140, 184–204, and 219–239; these read VAMLGFAASLLGEAVTGKGIL, AEPLLLFFILFTLLGAIGALG, LFVGRLAQLGIAFSLIGEIIT, and PINEIEPLLLFNILFFFFAAI.

It belongs to the ELIP/psbS family.

It localises to the plastid. The protein resides in the chloroplast thylakoid membrane. Functionally, involved in high light-mediated energy-dependent nonphotochemical quenching (NPQ, qE) and thermal dissipation (TD) thus regulating energy conversion in photosystem II and protecting from photoinhibition. Also seems to regulate quantum yield of electron transport in fluctuating light conditions. This chain is Photosystem II 22 kDa protein 2, chloroplastic, found in Oryza sativa subsp. indica (Rice).